We begin with the raw amino-acid sequence, 447 residues long: Tubulin beta-2 chain (447 aa).

Residues glutamine 11, glutamate 69, serine 138, glycine 142, threonine 143, glycine 144, asparagine 204, and asparagine 226 each coordinate GTP. Glutamate 69 provides a ligand contact to Mg(2+). The segment at aspartate 427–glutamate 447 is disordered. Positions glutamate 432–glutamate 447 are enriched in acidic residues.

The protein belongs to the tubulin family. As to quaternary structure, dimer of alpha and beta chains. A typical microtubule is a hollow water-filled tube with an outer diameter of 25 nm and an inner diameter of 15 nM. Alpha-beta heterodimers associate head-to-tail to form protofilaments running lengthwise along the microtubule wall with the beta-tubulin subunit facing the microtubule plus end conferring a structural polarity. Microtubules usually have 13 protofilaments but different protofilament numbers can be found in some organisms and specialized cells. The cofactor is Mg(2+).

Its subcellular location is the cytoplasm. It is found in the cytoskeleton. Its function is as follows. Tubulin is the major constituent of microtubules, a cylinder consisting of laterally associated linear protofilaments composed of alpha- and beta-tubulin heterodimers. Microtubules grow by the addition of GTP-tubulin dimers to the microtubule end, where a stabilizing cap forms. Below the cap, tubulin dimers are in GDP-bound state, owing to GTPase activity of alpha-tubulin. The chain is Tubulin beta-2 chain (TUB2) from Erysiphe pisi (Pea powdery mildew).